The sequence spans 311 residues: Malate dehydrogenase (311 aa).

NAD(+)-binding positions include 7–13 and D34; that span reads GAAGGIG. The substrate site is built by R81 and R87. Residues N94 and 117-119 contribute to the NAD(+) site; that span reads ITN. Positions 119 and 153 each coordinate substrate. H177 acts as the Proton acceptor in catalysis. M227 lines the NAD(+) pocket.

Belongs to the LDH/MDH superfamily. MDH type 1 family. Homodimer.

It carries out the reaction (S)-malate + NAD(+) = oxaloacetate + NADH + H(+). Catalyzes the reversible oxidation of malate to oxaloacetate. The protein is Malate dehydrogenase of Vibrio campbellii (strain ATCC BAA-1116).